The following is a 226-amino-acid chain: Small ribosomal subunit protein uS5 (226 aa).

Polar residues predominate over residues 1 to 18; sequence MAAPQRSRTTGAPSSGGP. The segment at 1–45 is disordered; sequence MAAPQRSRTTGAPSSGGPSENERGRGGDRRGGDRRGGDRRGGDDR. Residues 20-45 are compositionally biased toward basic and acidic residues; it reads ENERGRGGDRRGGDRRGGDRRGGDDR. Residues 48 to 111 enclose the S5 DRBM domain; it reads FVERVVTINR…EEAKKNFFRV (64 aa).

This sequence belongs to the universal ribosomal protein uS5 family. In terms of assembly, part of the 30S ribosomal subunit. Contacts proteins S4 and S8.

Functionally, with S4 and S12 plays an important role in translational accuracy. Located at the back of the 30S subunit body where it stabilizes the conformation of the head with respect to the body. This is Small ribosomal subunit protein uS5 from Beutenbergia cavernae (strain ATCC BAA-8 / DSM 12333 / CCUG 43141 / JCM 11478 / NBRC 16432 / NCIMB 13614 / HKI 0122).